A 394-amino-acid polypeptide reads, in one-letter code: Elongation factor Tu (394 aa).

Residues Lys10–Gln204 form the tr-type G domain. The G1 stretch occupies residues Gly19–Thr26. Residue Gly19–Thr26 participates in GTP binding. Position 26 (Thr26) interacts with Mg(2+). The segment at Gly60–Asn64 is G2. The G3 stretch occupies residues Asp81–Gly84. Residues Asp81–His85 and Asn136–Asp139 contribute to the GTP site. The G4 stretch occupies residues Asn136 to Asp139. Positions Ser174–Leu176 are G5.

Belongs to the TRAFAC class translation factor GTPase superfamily. Classic translation factor GTPase family. EF-Tu/EF-1A subfamily. Monomer.

The protein resides in the cytoplasm. It catalyses the reaction GTP + H2O = GDP + phosphate + H(+). In terms of biological role, GTP hydrolase that promotes the GTP-dependent binding of aminoacyl-tRNA to the A-site of ribosomes during protein biosynthesis. This Shewanella putrefaciens (Pseudomonas putrefaciens) protein is Elongation factor Tu.